The following is a 194-amino-acid chain: Imidazoleglycerol-phosphate dehydratase (194 aa).

It belongs to the imidazoleglycerol-phosphate dehydratase family.

The protein localises to the cytoplasm. The enzyme catalyses D-erythro-1-(imidazol-4-yl)glycerol 3-phosphate = 3-(imidazol-4-yl)-2-oxopropyl phosphate + H2O. Its pathway is amino-acid biosynthesis; L-histidine biosynthesis; L-histidine from 5-phospho-alpha-D-ribose 1-diphosphate: step 6/9. This Sulfurisphaera tokodaii (strain DSM 16993 / JCM 10545 / NBRC 100140 / 7) (Sulfolobus tokodaii) protein is Imidazoleglycerol-phosphate dehydratase.